We begin with the raw amino-acid sequence, 215 residues long: Histidine biosynthesis bifunctional protein HisIE (215 aa).

A phosphoribosyl-AMP cyclohydrolase region spans residues 1–126 (MSHSDLPLAN…GHKSPPPADM (126 aa)). The segment at 127–215 (LTELARVIGD…VYRKLGDRRR (89 aa)) is phosphoribosyl-ATP pyrophosphohydrolase.

The protein in the N-terminal section; belongs to the PRA-CH family. It in the C-terminal section; belongs to the PRA-PH family.

It is found in the cytoplasm. The catalysed reaction is 1-(5-phospho-beta-D-ribosyl)-ATP + H2O = 1-(5-phospho-beta-D-ribosyl)-5'-AMP + diphosphate + H(+). The enzyme catalyses 1-(5-phospho-beta-D-ribosyl)-5'-AMP + H2O = 1-(5-phospho-beta-D-ribosyl)-5-[(5-phospho-beta-D-ribosylamino)methylideneamino]imidazole-4-carboxamide. Its pathway is amino-acid biosynthesis; L-histidine biosynthesis; L-histidine from 5-phospho-alpha-D-ribose 1-diphosphate: step 2/9. The protein operates within amino-acid biosynthesis; L-histidine biosynthesis; L-histidine from 5-phospho-alpha-D-ribose 1-diphosphate: step 3/9. In Synechocystis sp. (strain ATCC 27184 / PCC 6803 / Kazusa), this protein is Histidine biosynthesis bifunctional protein HisIE (hisI).